The sequence spans 145 residues: Protein SprT-like (145 aa).

The SprT-like domain maps to 5-140; it reads DYVREVSLAD…ACGRCHGRLI (136 aa). Zn(2+) is bound at residue His-64. The active site involves Glu-65. Residue His-68 coordinates Zn(2+).

The protein belongs to the SprT family. Zn(2+) is required as a cofactor.

Its subcellular location is the cytoplasm. The sequence is that of Protein SprT-like from Streptococcus equi subsp. zooepidemicus (strain MGCS10565).